Here is a 257-residue protein sequence, read N- to C-terminus: Discoidin-2 (257 aa).

Positions Met1–Pro155 are beta-sandwich. An F5/8 type C domain is found at Cys10–Leu154. 3 residues coordinate Ca(2+): Asn39, Ser40, and Asp47. A Cell attachment site motif is present at residues Arg81 to Asp83. At His84 the chain carries Phosphohistidine. The linker stretch occupies residues Val156 to Pro162. Positions Ser163 to Asn257 are lectin-like. A carbohydrate is bound by residues Asp209, Arg218, and Trp238.

Homotrimer. The N-terminus is blocked. Maturing spore cells.

In terms of biological role, galactose-binding lectin. May be necessary for the primary process of spore formation and may be involved in spore coat formation. In Dictyostelium discoideum (Social amoeba), this protein is Discoidin-2 (dscE).